A 326-amino-acid chain; its full sequence is 5-dehydro-2-deoxygluconokinase (326 aa).

The protein belongs to the carbohydrate kinase PfkB family.

The catalysed reaction is 5-dehydro-2-deoxy-D-gluconate + ATP = 6-phospho-5-dehydro-2-deoxy-D-gluconate + ADP + H(+). It participates in polyol metabolism; myo-inositol degradation into acetyl-CoA; acetyl-CoA from myo-inositol: step 5/7. In terms of biological role, catalyzes the phosphorylation of 5-dehydro-2-deoxy-D-gluconate (2-deoxy-5-keto-D-gluconate or DKG) to 6-phospho-5-dehydro-2-deoxy-D-gluconate (DKGP). The sequence is that of 5-dehydro-2-deoxygluconokinase from Shouchella clausii (strain KSM-K16) (Alkalihalobacillus clausii).